Consider the following 252-residue polypeptide: 2-succinyl-6-hydroxy-2,4-cyclohexadiene-1-carboxylate synthase (252 aa).

This sequence belongs to the AB hydrolase superfamily. MenH family. Monomer.

It catalyses the reaction 5-enolpyruvoyl-6-hydroxy-2-succinyl-cyclohex-3-ene-1-carboxylate = (1R,6R)-6-hydroxy-2-succinyl-cyclohexa-2,4-diene-1-carboxylate + pyruvate. It functions in the pathway quinol/quinone metabolism; 1,4-dihydroxy-2-naphthoate biosynthesis; 1,4-dihydroxy-2-naphthoate from chorismate: step 3/7. Its pathway is quinol/quinone metabolism; menaquinone biosynthesis. Functionally, catalyzes a proton abstraction reaction that results in 2,5-elimination of pyruvate from 2-succinyl-5-enolpyruvyl-6-hydroxy-3-cyclohexene-1-carboxylate (SEPHCHC) and the formation of 2-succinyl-6-hydroxy-2,4-cyclohexadiene-1-carboxylate (SHCHC). The sequence is that of 2-succinyl-6-hydroxy-2,4-cyclohexadiene-1-carboxylate synthase from Salmonella paratyphi B (strain ATCC BAA-1250 / SPB7).